The chain runs to 131 residues: Large ribosomal subunit protein bL19 (131 aa).

It belongs to the bacterial ribosomal protein bL19 family.

In terms of biological role, this protein is located at the 30S-50S ribosomal subunit interface and may play a role in the structure and function of the aminoacyl-tRNA binding site. This chain is Large ribosomal subunit protein bL19, found in Rhodopseudomonas palustris (strain HaA2).